A 250-amino-acid chain; its full sequence is Large ribosomal subunit protein uL29m (250 aa).

The N-terminal 24 residues, 1–24 (MRPGAASIRTTGSVLAFLVPSAQC), are a transit peptide targeting the mitochondrion. Residues 66 to 86 (VLSKKGSGDQPPKPVPITEKV) form a disordered region.

The protein belongs to the universal ribosomal protein uL29 family. As to quaternary structure, component of the mitochondrial large ribosomal subunit. Mature mitochondrial ribosomes consist of a small (37S) and a large (54S) subunit. The 37S subunit contains at least 33 different proteins and 1 molecule of RNA (15S). The 54S subunit contains at least 45 different proteins and 1 molecule of RNA (21S).

It is found in the mitochondrion. This Phaeosphaeria nodorum (strain SN15 / ATCC MYA-4574 / FGSC 10173) (Glume blotch fungus) protein is Large ribosomal subunit protein uL29m (MRPL4).